The primary structure comprises 509 residues: Maturase K (509 aa).

Belongs to the intron maturase 2 family. MatK subfamily.

It is found in the plastid. The protein localises to the chloroplast. In terms of biological role, usually encoded in the trnK tRNA gene intron. Probably assists in splicing its own and other chloroplast group II introns. This is Maturase K from Avicennia marina (Grey mangrove).